Consider the following 217-residue polypeptide: MOB kinase activator 3A (217 aa).

Zn(2+) contacts are provided by cysteine 83, cysteine 88, histidine 165, and histidine 170.

This sequence belongs to the MOB1/phocein family.

May regulate the activity of kinases. This Pongo abelii (Sumatran orangutan) protein is MOB kinase activator 3A (MOB3A).